The following is an 854-amino-acid chain: uncharacterized protein (854 aa).

It belongs to the PEP-utilizing enzyme family.

This is an uncharacterized protein from Mycobacterium tuberculosis (strain CDC 1551 / Oshkosh).